Consider the following 303-residue polypeptide: MRIIFMGSPEFSVVALSSILNNTEHKIVSVYTRVPKPAGRGKVLTKTPIHTVAEMHGLTVYTPKSLKRIEEQDRIKELNPDVIVVVAYGLIIPKEVLSIPKYGCINIHPSLLPRWRGAAPIHYAILHGDSQTGVTIMQMNEGWDEGDILLQKKLSIDEQDNIETLSNKLSNLGGAMLVEVLNNIDNLVPVAQNEDNATYTNKIEDFHIDINETAEVACRRIRALYPRAFVFFNGKRLRILQASYYYDDSISSLKPSSILNSGMHIKCKGNTILVPLVVQMEGKTLCSIKDFVCGYNVKDYSIT.

Residue Ser-110–Pro-113 participates in (6S)-5,6,7,8-tetrahydrofolate binding.

This sequence belongs to the Fmt family.

The catalysed reaction is L-methionyl-tRNA(fMet) + (6R)-10-formyltetrahydrofolate = N-formyl-L-methionyl-tRNA(fMet) + (6S)-5,6,7,8-tetrahydrofolate + H(+). Attaches a formyl group to the free amino group of methionyl-tRNA(fMet). The formyl group appears to play a dual role in the initiator identity of N-formylmethionyl-tRNA by promoting its recognition by IF2 and preventing the misappropriation of this tRNA by the elongation apparatus. This Ehrlichia ruminantium (strain Gardel) protein is Methionyl-tRNA formyltransferase.